Reading from the N-terminus, the 380-residue chain is Cytochrome b (380 aa).

The next 4 helical transmembrane spans lie at 34–54, 78–99, 114–134, and 179–199; these read FGSL…FLAM, WLVR…YLHI, WNIG…GYVL, and FFAF…LHLL. Heme b-binding residues include histidine 84 and histidine 98. Heme b contacts are provided by histidine 183 and histidine 197. Histidine 202 is an a ubiquinone binding site. A run of 4 helical transmembrane segments spans residues 227–247, 289–309, 321–341, and 348–368; these read YKDT…SMLS, LGGV…PMIH, MTQF…WIGG, and FIEI…IFMP.

Belongs to the cytochrome b family. The cytochrome bc1 complex contains 3 respiratory subunits (MT-CYB, CYC1 and UQCRFS1), 2 core proteins (UQCRC1 and UQCRC2) and probably 6 low-molecular weight proteins. Heme b is required as a cofactor.

It localises to the mitochondrion inner membrane. Component of the ubiquinol-cytochrome c reductase complex (complex III or cytochrome b-c1 complex) that is part of the mitochondrial respiratory chain. The b-c1 complex mediates electron transfer from ubiquinol to cytochrome c. Contributes to the generation of a proton gradient across the mitochondrial membrane that is then used for ATP synthesis. The sequence is that of Cytochrome b (mt-cyb) from Ranodon sibiricus (Siberian salamander).